The sequence spans 278 residues: HTH-type transcriptional activator RhaS (278 aa).

An HTH araC/xylS-type domain is found at asparagine 174–glycine 272. DNA-binding regions (H-T-H motif) lie at residues aspartate 191–threonine 212 and valine 239–phenylalanine 262.

In terms of assembly, binds DNA as a dimer.

The protein localises to the cytoplasm. Its function is as follows. Activates expression of the rhaBAD and rhaT operons. The sequence is that of HTH-type transcriptional activator RhaS from Escherichia coli O81 (strain ED1a).